We begin with the raw amino-acid sequence, 898 residues long: Fasciclin-2 (898 aa).

The signal sequence occupies residues 1–22; it reads MRTVACAVLLACFMGCLAGAWA. Residues 23–764 lie on the Extracellular side of the membrane; that stretch reads QSAGLEILPN…EDGSEGQMSS (742 aa). 5 consecutive Ig-like C2-type domains span residues 31 to 124, 134 to 219, 226 to 316, 321 to 423, and 428 to 525; these read PNSE…KQLS, PITW…RPIR, PQMS…VEVT, PRIG…GHLM, and PSFA…IMLR. 6 N-linked (GlcNAc...) asparagine glycosylation sites follow: Asn-35, Asn-51, Asn-149, Asn-192, Asn-297, and Asn-328. Cys-48 and Cys-113 are disulfide-bonded. Disulfide bonds link Cys-156–Cys-203 and Cys-248–Cys-300. The cysteines at positions 343 and 407 are disulfide-linked. N-linked (GlcNAc...) asparagine glycans are attached at residues Asn-447, Asn-457, and Asn-580. A disulfide bond links Cys-450 and Cys-509. Fibronectin type-III domains follow at residues 532-626 and 644-745; these read AVLQ…TPRI and GTEN…VKDP. Residues 765–782 form a helical membrane-spanning segment; it reads AAIVVLVVAALLLALLVV. Residues 783–898 are Cytoplasmic-facing; it reads DLVCCLVWRG…TSFVGKDSAV (116 aa).

The protein resides in the membrane. Neuronal recognition molecule. Involved in a pathway recognition for axons during the development of nerve fascicles. This Schistocerca americana (American grasshopper) protein is Fasciclin-2 (FAS2).